The primary structure comprises 668 residues: DNA damage-responsive serine/threonine-protein kinase RqkA (668 aa).

The Protein kinase domain maps to 13-272; sequence YELLALLGEG…SGAALAHLWA (260 aa). Residues 19-27 and K42 contribute to the ATP site; that span reads LGEGGSAQV. D137 serves as the catalytic Proton acceptor.

This sequence belongs to the protein kinase superfamily. Ser/Thr protein kinase family. Pyrroloquinoline quinone is required as a cofactor. Post-translationally, autophosphorylated.

It catalyses the reaction L-seryl-[protein] + ATP = O-phospho-L-seryl-[protein] + ADP + H(+). The catalysed reaction is L-threonyl-[protein] + ATP = O-phospho-L-threonyl-[protein] + ADP + H(+). With respect to regulation, autokinase activity is stimulated by DNA damage. Stimulated by PQQ and DNA ends in vitro. Its function is as follows. Plays an important role in radiation resistance and DNA double-strand break (DSB) repair. Involved in transcriptional regulation of genes important for bacterial stress response. Phosphorylates PprA in vitro. The chain is DNA damage-responsive serine/threonine-protein kinase RqkA (rqkA) from Deinococcus radiodurans (strain ATCC 13939 / DSM 20539 / JCM 16871 / CCUG 27074 / LMG 4051 / NBRC 15346 / NCIMB 9279 / VKM B-1422 / R1).